The sequence spans 87 residues: uncharacterized protein (87 aa).

The signal sequence occupies residues 1 to 23 (MAVSVLRLTVVLGLLVLFLTCYA). Residues 24–44 (DDKPDKPDDKPDDSGKDPKPD) form a disordered region.

It localises to the secreted. This is an uncharacterized protein from Homo sapiens (Human).